The sequence spans 157 residues: MSIEIANESGADVDTDAVLAVARHALDEMGVNQLAELSVLLVDIDYMAELNHRWMGGDGPTDVLAFPMDEGSVDHGPGENAAAGAEPALLGDIVLCPEVAAKQAVTAGHSTADELHLLTVHGVLHLLGYDHAEPEEEREMFALQARLLASWRSTRSR.

Residues histidine 121, histidine 125, and histidine 131 each contribute to the Zn(2+) site.

This sequence belongs to the endoribonuclease YbeY family. Requires Zn(2+) as cofactor.

Its subcellular location is the cytoplasm. Its function is as follows. Single strand-specific metallo-endoribonuclease involved in late-stage 70S ribosome quality control and in maturation of the 3' terminus of the 16S rRNA. In Salinispora tropica (strain ATCC BAA-916 / DSM 44818 / JCM 13857 / NBRC 105044 / CNB-440), this protein is Endoribonuclease YbeY.